Reading from the N-terminus, the 243-residue chain is MKKVLIAALIAGFSLSATAAETIRFATEASYPPFESIDANNQIVGFDVDLAQALCKEIDATCTFSNQAFDSLIPSLKFRRVEAVMAGMDITPEREKQVLFTTPYYDNSALFVGQQGKYTSVDQLKGKKVGVQNGTTHQKFIMDKHPEITTVPYDSYQNAKLDLQNGRIDGVFGDTAVVTEWLKDNPKLAAVGDKVTDKDYFGTGLGIAVRQGNTELQQKLNTALEKVKKDGTYETIYNKWFQK.

The first 19 residues, 1–19, serve as a signal peptide directing secretion; the sequence is MKKVLIAALIAGFSLSATA.

This sequence belongs to the bacterial solute-binding protein 3 family. In terms of assembly, the complex is composed of two ATP-binding proteins (ArtP), two transmembrane proteins (ArtM and ArtQ) and two solute-binding proteins (ArtJ and ArtI).

The protein localises to the periplasm. Functionally, part of the ABC transporter complex ArtPIQMJ involved in arginine transport. The polypeptide is Putative ABC transporter arginine-binding protein 2 (artI) (Escherichia coli (strain K12)).